The following is a 981-amino-acid chain: Proline-rich transmembrane protein 3 (981 aa).

Residues methionine 1–glycine 27 form the signal peptide. The Extracellular portion of the chain corresponds to arginine 28–histidine 474. Disordered regions lie at residues proline 43–arginine 107 and proline 169–proline 457. The span at proline 65 to glutamate 85 shows a compositional bias: basic and acidic residues. The segment at serine 297–serine 302 is O-glycosylated at one site. Serine 329 is a glycosylation site (O-linked (GalNAc...) serine). Over residues alanine 331 to arginine 340 the composition is skewed to basic and acidic residues. The O-linked (GalNAc...) threonine glycan is linked to threonine 363. N-linked (GlcNAc...) asparagine glycosylation occurs at asparagine 379. The span at alanine 411 to alanine 427 shows a compositional bias: polar residues. Low complexity predominate over residues threonine 437–proline 457. The helical transmembrane segment at valine 475–alanine 495 threads the bilayer. Topologically, residues alanine 496–arginine 501 are cytoplasmic. A helical transmembrane segment spans residues leucine 502–leucine 522. The Extracellular portion of the chain corresponds to threonine 523–asparagine 542. The chain crosses the membrane as a helical span at residues leucine 543–glycine 563. Residues leucine 564–asparagine 570 are Cytoplasmic-facing. The chain crosses the membrane as a helical span at residues proline 571–leucine 591. Over serine 592–asparagine 598 the chain is Extracellular. The helical transmembrane segment at leucine 599–leucine 619 threads the bilayer. At cysteine 620–arginine 638 the chain is on the cytoplasmic side. A helical transmembrane segment spans residues leucine 639–leucine 659. Over tryptophan 660–histidine 679 the chain is Extracellular. Residues phenylalanine 680–alanine 700 form a helical membrane-spanning segment. Residues alanine 701–leucine 981 lie on the Cytoplasmic side of the membrane. Positions alanine 759–proline 807 are disordered. The span at alanine 765–arginine 780 shows a compositional bias: low complexity. Serine 777 is modified (phosphoserine). Omega-N-methylarginine is present on arginine 780. 9 positions are modified to phosphoserine: serine 789, serine 798, serine 808, serine 815, serine 854, serine 874, serine 902, serine 903, and serine 911. Residues leucine 836–serine 865 are disordered. Residues threonine 937–leucine 981 form a disordered region. Positions arginine 972–leucine 981 are enriched in polar residues.

The protein resides in the membrane. In Homo sapiens (Human), this protein is Proline-rich transmembrane protein 3 (PRRT3).